The chain runs to 409 residues: LIM/homeobox protein ttx-3 (409 aa).

LIM zinc-binding domains lie at 108 to 169 (NQCC…RYQK) and 171 to 232 (CRKC…VRST). 2 disordered regions span residues 245–299 (AVVA…RTSF) and 372–409 (MNPPLSSSSSGHSTDGYQLNTPPLSSEIYSPNSNYTHL). The span at 247-267 (VAPPPPPPTTTTAPPPAAPEQ) shows a compositional bias: pro residues. The homeobox DNA-binding region spans 292–351 (SKRMRTSFKHHQLRAMKTYFALNHNPDAKDLKQLAAKTNLTKRVLQVWFQNARAKYRREL). Polar residues predominate over residues 382–409 (GHSTDGYQLNTPPLSSEIYSPNSNYTHL).

In terms of tissue distribution, expressed in the AIA, AIN and AIY interneurons, and in the NSM neurons. Expressed also in ADL and ASI sensory neurons in 60-70% of L2 larvae. Expression is also detected in head muscles of embryos and some early larvae but not late larvae or adults.

The protein resides in the nucleus. Its subcellular location is the perikaryon. The protein localises to the cell projection. It localises to the axon. Transcription factor. Binds to a sequence motif, 5'-TTATTGGCTTCGTTAA-3', which may be involved in AIY interneuron function, in the regulatory elements of target genes; binding is more efficient, in vitro, together with homeobox protein ceh-10. Required for specification of the AIA and AIY interneurons and the NSM neurons. Positively regulates the expression of a number of genes including ceh-10, ceh-23, kal-1, hen-1, ser-2, unc-17 and sra-11 in AIY neurons, and cat-4, flp-4, bas-1, ptps-1 and mgl-1 in NSM neurons. In concert with WNT/beta-catenin signaling, initiates expression of homeobox ceh-10 in AIY, but not in the sister cells, SMDD motor neurons. Also acts in an autoregulatory feedback loop to maintain its own expression. Plays a role in the thermotactic response, olfactory imprinting, regulation of longevity, control of dauer formation and axon outgrowth and pathfinding. Not required for normal chemosensory behavior. The protein is LIM/homeobox protein ttx-3 of Caenorhabditis elegans.